The chain runs to 311 residues: Reaction center protein L chain (311 aa).

A run of 3 helical transmembrane segments spans residues 68–90 (FWGF…ETIL), 123–151 (GFAW…SMKL), and 156–178 (HVPI…RPIA). (7R,8Z)-bacteriochlorophyll b-binding residues include H183 and H213. The chain crosses the membrane as a helical span at residues 211–238 (PFHAIGITGLFASTWLLACHGSLILSAA). H230 is a binding site for Fe cation. F253 is an a ubiquinone binding site. The helical transmembrane segment at 262–287 (GESGVHRLGYIFAIGGILSADLCILL) threads the bilayer. H267 contributes to the Fe cation binding site.

This sequence belongs to the reaction center PufL/M/PsbA/D family. Reaction center is composed of four bacteriochlorophylls, two bacteriopheophytins, two ubiquinones, one iron, and two highly hydrophobic polypeptide chains (designated L and M).

The protein localises to the cell membrane. The reaction center is a membrane-bound complex that mediates the initial photochemical event in the electron transfer process of photosynthesis. The chain is Reaction center protein L chain (pufL) from Chloroflexus aurantiacus (strain ATCC 29366 / DSM 635 / J-10-fl).